The sequence spans 211 residues: Claudin-1 (211 aa).

Residues 1–7 (MANAGLQ) lie on the Cytoplasmic side of the membrane. A helical transmembrane segment spans residues 8–28 (LLGFILASLGWIGSIVSTALP). The Extracellular segment spans residues 29–81 (QWKIYSYAGDNIVTAQAIYEGLWMSCVSQSTGQIQCKVFDSLLNLNSTLQATR). A disulfide bridge links Cys54 with Cys64. A helical transmembrane segment spans residues 82–102 (ALMVIGILLGLIAIFVSTIGM). The Cytoplasmic portion of the chain corresponds to 103-115 (KCMRCLEDDEVQK). The chain crosses the membrane as a helical span at residues 116-136 (MWMAVIGGIIFLISGLATLVA). At 137–163 (TAWYGNRIVQEFYDPLTPINARYEFGQ) the chain is on the extracellular side. A helical transmembrane segment spans residues 164 to 184 (ALFTGWAAASLCLLGGVLLSC). Residues 185–211 (SCPRKTTSYPTPRPYPKPTPSSGKDYV) lie on the Cytoplasmic side of the membrane. Residues 190 to 211 (TTSYPTPRPYPKPTPSSGKDYV) are disordered. Residues 210-211 (YV) form an interactions with TJP1, TJP2, TJP3 and PATJ region.

The protein belongs to the claudin family. As to quaternary structure, can form homo- and heteropolymers with other CLDN. Homopolymers interact with CLDN3, but not CLDN2, homopolymers. Directly interacts with TJP1/ZO-1, TJP2/ZO-2 and TJP3/ZO-3. Interacts with MPDZ and PATJ. Interacts with OCLN, CD81, CLDN4, CLDN6 and CLDN9. Detected in epidermis and liver (at protein level). Widely expressed, with highest levels in liver and kidney.

The protein localises to the cell junction. The protein resides in the tight junction. It is found in the cell membrane. It localises to the basolateral cell membrane. Claudins function as major constituents of the tight junction complexes that regulate the permeability of epithelia. While some claudin family members play essential roles in the formation of impermeable barriers, others mediate the permeability to ions and small molecules. Often, several claudin family members are coexpressed and interact with each other, and this determines the overall permeability. CLDN1 is required to prevent the paracellular diffusion of small molecules through tight junctions in the epidermis and is required for the normal barrier function of the skin. Required for normal water homeostasis and to prevent excessive water loss through the skin, probably via an indirect effect on the expression levels of other proteins, since CLDN1 itself seems to be dispensable for water barrier formation in keratinocyte tight junctions. This chain is Claudin-1 (Cldn1), found in Mus musculus (Mouse).